We begin with the raw amino-acid sequence, 265 residues long: Probable trehalose-phosphate phosphatase (265 aa).

The active-site Nucleophile is aspartate 35. The Mg(2+) site is built by aspartate 35, aspartate 37, and aspartate 213. 35–37 (DID) contributes to the substrate binding site.

It belongs to the trehalose phosphatase family. Requires Mg(2+) as cofactor.

The enzyme catalyses alpha,alpha-trehalose 6-phosphate + H2O = alpha,alpha-trehalose + phosphate. It participates in glycan biosynthesis; trehalose biosynthesis. Functionally, removes the phosphate from trehalose 6-phosphate to produce free trehalose. This is Probable trehalose-phosphate phosphatase (otsB) from Sinorhizobium fredii (strain NBRC 101917 / NGR234).